We begin with the raw amino-acid sequence, 123 residues long: Cysteine proteinase inhibitor 8 (123 aa).

The signal sequence occupies residues 1–19 (MARIPLLLALLLAVSAAAA). In terms of domain architecture, Cystatin spans 33-91 (GGWSPITDVGDPHIQELGGWAVERHASLSSDGLRFRRVTSGEQQVVSGMNYRLVVSASD). The short motif at 76–80 (QVVSG) is the Secondary area of contact element.

It belongs to the cystatin family. Phytocystatin subfamily.

The protein localises to the secreted. In terms of biological role, specific inhibitor of cysteine proteinases. Probably involved in the regulation of endogenous processes and in defense against pests and pathogens. This chain is Cysteine proteinase inhibitor 8, found in Oryza sativa subsp. japonica (Rice).